The chain runs to 217 residues: Putative thymidylate synthase (217 aa).

Cys-139 is an active-site residue.

It belongs to the thymidylate synthase family. Archaeal-type ThyA subfamily. As to quaternary structure, monomer.

The protein resides in the cytoplasm. It functions in the pathway pyrimidine metabolism; dTTP biosynthesis. May catalyze the biosynthesis of dTMP using an unknown cosubstrate. This is Putative thymidylate synthase from Methanosarcina barkeri (strain Fusaro / DSM 804).